A 347-amino-acid chain; its full sequence is Quinolinate synthase (347 aa).

2 residues coordinate iminosuccinate: histidine 47 and serine 68. Position 113 (cysteine 113) interacts with [4Fe-4S] cluster. Residues 139-141 (YAN) and serine 156 contribute to the iminosuccinate site. Cysteine 200 contributes to the [4Fe-4S] cluster binding site. Residues 226 to 228 (HPE) and threonine 243 each bind iminosuccinate. Cysteine 297 lines the [4Fe-4S] cluster pocket.

The protein belongs to the quinolinate synthase family. Type 1 subfamily. [4Fe-4S] cluster serves as cofactor.

It is found in the cytoplasm. The catalysed reaction is iminosuccinate + dihydroxyacetone phosphate = quinolinate + phosphate + 2 H2O + H(+). The protein operates within cofactor biosynthesis; NAD(+) biosynthesis; quinolinate from iminoaspartate: step 1/1. In terms of biological role, catalyzes the condensation of iminoaspartate with dihydroxyacetone phosphate to form quinolinate. The sequence is that of Quinolinate synthase from Escherichia coli (strain K12 / MC4100 / BW2952).